The primary structure comprises 459 residues: Cysteine--tRNA ligase (459 aa).

Cysteine 29 contributes to the Zn(2+) binding site. The short motif at 31 to 41 is the 'HIGH' region element; that stretch reads PTVYDRAHIGN. Positions 209, 234, and 238 each coordinate Zn(2+). The short motif at 266–270 is the 'KMSKS' region element; the sequence is KMSKS. Lysine 269 serves as a coordination point for ATP.

It belongs to the class-I aminoacyl-tRNA synthetase family. In terms of assembly, monomer. The cofactor is Zn(2+).

The protein resides in the cytoplasm. The enzyme catalyses tRNA(Cys) + L-cysteine + ATP = L-cysteinyl-tRNA(Cys) + AMP + diphosphate. The polypeptide is Cysteine--tRNA ligase (Paramagnetospirillum magneticum (strain ATCC 700264 / AMB-1) (Magnetospirillum magneticum)).